Here is a 205-residue protein sequence, read N- to C-terminus: Probable GTP-binding protein EngB (205 aa).

An EngB-type G domain is found at 22-196; the sequence is NLPEVAFVGR…LKVLDEFIHK (175 aa). GTP is bound by residues 30-37, 57-61, 76-79, 143-146, and 175-177; these read GRSNVGKS, GRTQL, DLPG, TKVD, and FSA. The Mg(2+) site is built by Ser37 and Thr59.

This sequence belongs to the TRAFAC class TrmE-Era-EngA-EngB-Septin-like GTPase superfamily. EngB GTPase family. Requires Mg(2+) as cofactor.

Necessary for normal cell division and for the maintenance of normal septation. The polypeptide is Probable GTP-binding protein EngB (Desulforamulus reducens (strain ATCC BAA-1160 / DSM 100696 / MI-1) (Desulfotomaculum reducens)).